The primary structure comprises 217 residues: Probable cutinase 3 (217 aa).

A signal peptide spans 1 to 17 (MSLRSLFVAGLATLALA). 2 cysteine pairs are disulfide-bonded: C39–C118 and C65–C79. S129 functions as the Nucleophile in the catalytic mechanism. Cysteines 180 and 187 form a disulfide. The active site involves D184. H197 serves as the catalytic Proton donor/acceptor.

The protein belongs to the cutinase family.

The protein localises to the secreted. The enzyme catalyses cutin + H2O = cutin monomers.. Its function is as follows. Catalyzes the hydrolysis of complex carboxylic polyesters found in the cell wall of plants. Degrades cutin, a macromolecule that forms the structure of the plant cuticle. This Aspergillus fumigatus (strain CBS 144.89 / FGSC A1163 / CEA10) (Neosartorya fumigata) protein is Probable cutinase 3.